The following is a 211-amino-acid chain: SAGA-associated factor 11 homolog (211 aa).

The segment at 115-136 (CTCPHCDRLVAAARFAPHLEKC) adopts an SGF11-type zinc-finger fold. The disordered stretch occupies residues 153 to 211 (TKEGASASSSSTSTYIQSGGNTGGTDDEDDVDWSSDKRKKKSTQNSRNNGSKKNNGKIF). Residues 157–166 (ASASSSSTST) are compositionally biased toward low complexity. Serine 187 carries the post-translational modification Phosphoserine. A compositionally biased stretch (low complexity) spans 197–211 (NSRNNGSKKNNGKIF).

The protein belongs to the SGF11 family. Component of some SAGA transcription coactivator-HAT complexes, at least composed of Ada2b, not/nonstop, Pcaf/Gcn5, Sgf11 and Spt3. Within the SAGA complex, Sgf11, e(y)2, and not/nonstop form an additional subcomplex of SAGA called the DUB module (deubiquitination module). Interacts directly with not/nonstop. Interacts with the AMEX complex component xmas-2. Interacts with Cbp80; important for promoter recruitment of Sgf11 that is not associated with the DUB module.

The protein resides in the nucleus. It is found in the nucleoplasm. Its subcellular location is the cytoplasm. Functionally, component of the transcription regulatory histone acetylation (HAT) complex SAGA, a multiprotein complex that activates transcription by remodeling chromatin and mediating histone acetylation and deubiquitination. Within the SAGA complex, participates in a subcomplex that specifically deubiquitinates histone H2B. The SAGA complex is recruited to specific gene promoters by activators, where it is required for transcription. Required for nuclear receptor-mediated transactivation. Binds independently on SAGA to promoters in an RNA-dependent manner. Binds to mRNA and is essential for total mRNA export from the nucleus. Required to counteract heterochromatin silencing. Controls the development of neuronal connectivity in visual system by being required for accurate axon targeting in the optic lobe. Required for expression of ecdysone-induced genes such as br/broad. The chain is SAGA-associated factor 11 homolog from Drosophila mojavensis (Fruit fly).